Consider the following 156-residue polypeptide: Small ribosomal subunit protein uS7 (156 aa).

This sequence belongs to the universal ribosomal protein uS7 family. As to quaternary structure, part of the 30S ribosomal subunit. Contacts proteins S9 and S11.

Functionally, one of the primary rRNA binding proteins, it binds directly to 16S rRNA where it nucleates assembly of the head domain of the 30S subunit. Is located at the subunit interface close to the decoding center, probably blocks exit of the E-site tRNA. The protein is Small ribosomal subunit protein uS7 of Paramagnetospirillum magneticum (strain ATCC 700264 / AMB-1) (Magnetospirillum magneticum).